The primary structure comprises 898 residues: Coiled-coil domain-containing protein 186 (898 aa).

Disordered stretches follow at residues 1–43 (MSET…NESK), 68–95 (NYIP…QIAN), and 702–749 (RRKL…SSVA). At S2 the chain carries N-acetylserine. Polar residues predominate over residues 82–95 (KTDTGSENSEQIAN). The stretch at 201–712 (KYLQQEHIIK…RKLDQVESGS (512 aa)) forms a coiled coil. Basic and acidic residues predominate over residues 703–717 (RKLDQVESGSYDKEV). A compositionally biased stretch (low complexity) spans 718 to 734 (SSMGSRSSSSGSLNARS). Position 740 is a phosphoserine (S740). Coiled coils occupy residues 759–803 (AMLI…IQSY) and 855–894 (KLQA…LEQR).

The polypeptide is Coiled-coil domain-containing protein 186 (CCDC186) (Homo sapiens (Human)).